The primary structure comprises 206 residues: Dephospho-CoA kinase (206 aa).

The region spanning 4 to 204 (IVGLTGGIGS…HQYLQLANAQ (201 aa)) is the DPCK domain. Residue 12–17 (GSGKST) coordinates ATP.

This sequence belongs to the CoaE family.

It localises to the cytoplasm. The catalysed reaction is 3'-dephospho-CoA + ATP = ADP + CoA + H(+). The protein operates within cofactor biosynthesis; coenzyme A biosynthesis; CoA from (R)-pantothenate: step 5/5. Its function is as follows. Catalyzes the phosphorylation of the 3'-hydroxyl group of dephosphocoenzyme A to form coenzyme A. The chain is Dephospho-CoA kinase from Pasteurella multocida (strain Pm70).